We begin with the raw amino-acid sequence, 181 residues long: Small ribosomal subunit protein uS4 (181 aa).

An S4 RNA-binding domain is found at 104–172 (RRLQTIVYKK…SRPPVMSQQE (69 aa)).

It belongs to the universal ribosomal protein uS4 family. As to quaternary structure, part of the 30S ribosomal subunit. Contacts protein S5. The interaction surface between S4 and S5 is involved in control of translational fidelity.

Functionally, one of the primary rRNA binding proteins, it binds directly to 16S rRNA where it nucleates assembly of the body of the 30S subunit. With S5 and S12 plays an important role in translational accuracy. This is Small ribosomal subunit protein uS4 from Saccharolobus solfataricus (strain ATCC 35092 / DSM 1617 / JCM 11322 / P2) (Sulfolobus solfataricus).